The following is a 130-amino-acid chain: Anti-adapter protein IraD (130 aa).

It belongs to the GpW/Gp25 family. IraD subfamily. In terms of assembly, interacts with RssB.

It localises to the cytoplasm. Functionally, inhibits RpoS proteolysis by regulating RssB activity, thereby increasing the stability of the sigma stress factor RpoS during oxidative stress. Its effect on RpoS stability is due to its interaction with RssB, which probably blocks the interaction of RssB with RpoS, and the consequent delivery of the RssB-RpoS complex to the ClpXP protein degradation pathway. In Escherichia coli O7:K1 (strain IAI39 / ExPEC), this protein is Anti-adapter protein IraD.